A 426-amino-acid polypeptide reads, in one-letter code: 5-aminovalerate aminotransferase DavT (426 aa).

Residues G112–S113, Y139, and D240–Q243 each bind pyridoxal 5'-phosphate. K269 bears the N6-(pyridoxal phosphate)lysine mark. T298 is a pyridoxal 5'-phosphate binding site.

The protein belongs to the class-III pyridoxal-phosphate-dependent aminotransferase family. Pyridoxal 5'-phosphate serves as cofactor.

It catalyses the reaction 5-aminopentanoate + 2-oxoglutarate = 5-oxopentanoate + L-glutamate. Catalyzes the conversion of 5-aminovalerate to 5-oxopentanoate. This is 5-aminovalerate aminotransferase DavT (davT) from Pseudomonas aeruginosa (strain ATCC 15692 / DSM 22644 / CIP 104116 / JCM 14847 / LMG 12228 / 1C / PRS 101 / PAO1).